Consider the following 75-residue polypeptide: Protein B7 (75 aa).

This chain is Protein B7 (B7), found in Human herpesvirus 6B (strain Z29) (HHV-6 variant B).